Consider the following 181-residue polypeptide: Shikimate kinase 2 (181 aa).

12-17 (GCGKTT) contacts ATP. Mg(2+) is bound by residues threonine 16 and aspartate 32. Residues aspartate 34, arginine 58, and glycine 79 each contribute to the substrate site. Positions 112–126 (EAEPEAELRPTLTGK) are LID domain. An ATP-binding site is contributed by arginine 120. Arginine 139 provides a ligand contact to substrate.

The protein belongs to the shikimate kinase family. AroL subfamily. Monomer. The cofactor is Mg(2+).

Its subcellular location is the cytoplasm. The catalysed reaction is shikimate + ATP = 3-phosphoshikimate + ADP + H(+). It participates in metabolic intermediate biosynthesis; chorismate biosynthesis; chorismate from D-erythrose 4-phosphate and phosphoenolpyruvate: step 5/7. In terms of biological role, catalyzes the specific phosphorylation of the 3-hydroxyl group of shikimic acid using ATP as a cosubstrate. This is Shikimate kinase 2 from Salmonella schwarzengrund (strain CVM19633).